A 253-amino-acid polypeptide reads, in one-letter code: MRILLSNDDGYLAPGLAALSDALQPLAELTVIAPEQNCSGASNSLTLSRPLSVQRAASTGFFYVNGTPTDSVHVALTGMADARPDLVVSGINNGQNMGEDTLYSGTVAAATEGIMFGVPAIAFSLVDKGWAHLPDAARVAAEIVKHYLAHPLPGQPLLNVNIPNLPYDELKGWKVTRLGKRHPSQPVIRQTDPRGEPIYWIGAAGEALDASDGTDFHAVANGFVSITPLQLDLTHTQMLPATREWARAGGRAS.

Residues Asp-8, Asp-9, Ser-39, and Asn-92 each contribute to the a divalent metal cation site.

It belongs to the SurE nucleotidase family. The cofactor is a divalent metal cation.

The protein resides in the cytoplasm. It carries out the reaction a ribonucleoside 5'-phosphate + H2O = a ribonucleoside + phosphate. In terms of biological role, nucleotidase that shows phosphatase activity on nucleoside 5'-monophosphates. In Burkholderia lata (strain ATCC 17760 / DSM 23089 / LMG 22485 / NCIMB 9086 / R18194 / 383), this protein is 5'-nucleotidase SurE 2.